The primary structure comprises 311 residues: Protoheme IX farnesyltransferase (311 aa).

A run of 9 helical transmembrane segments spans residues 32 to 52, 53 to 73, 104 to 124, 125 to 145, 153 to 173, 180 to 200, 224 to 244, 245 to 265, and 290 to 310; these read VMSL…VSIN, PWYG…AGVL, FVFG…FINW, FAAL…TIWL, IVIG…AATG, FLLF…LSLF, KQIL…FIID, FAGI…IYFA, and FYLA…YFII.

Belongs to the UbiA prenyltransferase family. Protoheme IX farnesyltransferase subfamily.

The protein localises to the cell inner membrane. It catalyses the reaction heme b + (2E,6E)-farnesyl diphosphate + H2O = Fe(II)-heme o + diphosphate. It functions in the pathway porphyrin-containing compound metabolism; heme O biosynthesis; heme O from protoheme: step 1/1. In terms of biological role, converts heme B (protoheme IX) to heme O by substitution of the vinyl group on carbon 2 of heme B porphyrin ring with a hydroxyethyl farnesyl side group. This Bartonella quintana (strain Toulouse) (Rochalimaea quintana) protein is Protoheme IX farnesyltransferase.